A 155-amino-acid chain; its full sequence is Ribosome maturation factor RimP (155 aa).

Belongs to the RimP family.

The protein localises to the cytoplasm. Functionally, required for maturation of 30S ribosomal subunits. In Parabacteroides distasonis (strain ATCC 8503 / DSM 20701 / CIP 104284 / JCM 5825 / NCTC 11152), this protein is Ribosome maturation factor RimP.